The sequence spans 160 residues: UPF0225 protein CGSHiGG_04185 (160 aa).

It belongs to the UPF0225 family.

This is UPF0225 protein CGSHiGG_04185 from Haemophilus influenzae (strain PittGG).